A 123-amino-acid chain; its full sequence is KQFTKCELSQVLKSMDGYKGVTLPEWICTIFHSSGYDTQTIVKNNGKTEYGLFQINNKMWCRDNQILPSRNICGISCNKFLDDDLTDDVMCAKKILDSEGIDYWLAHKPLCSEKLEQWLCEEL.

The C-type lysozyme domain occupies 1–123 (KQFTKCELSQ…KLEQWLCEEL (123 aa)). Cystine bridges form between Cys-6/Cys-120, Cys-28/Cys-111, Cys-61/Cys-77, and Cys-73/Cys-91. Residues Lys-79, Asp-82, Asp-84, Asp-87, and Asp-88 each coordinate Ca(2+).

The protein belongs to the glycosyl hydrolase 22 family. In terms of assembly, lactose synthase (LS) is a heterodimer of a catalytic component, beta1,4-galactosyltransferase (beta4Gal-T1) and a regulatory component, alpha-lactalbumin (LA). Mammary gland specific. Secreted in milk.

It localises to the secreted. Its function is as follows. Regulatory subunit of lactose synthase, changes the substrate specificity of galactosyltransferase in the mammary gland making glucose a good acceptor substrate for this enzyme. This enables LS to synthesize lactose, the major carbohydrate component of milk. In other tissues, galactosyltransferase transfers galactose onto the N-acetylglucosamine of the oligosaccharide chains in glycoproteins. The sequence is that of Alpha-lactalbumin (LALBA) from Equus asinus (Donkey).